A 106-amino-acid polypeptide reads, in one-letter code: Large ribosomal subunit protein bL31B (106 aa).

Positions 85-106 (PVQVAEEPVAKGKKKPSLKKKK) are disordered. Positions 95–106 (KGKKKPSLKKKK) are enriched in basic residues.

Belongs to the bacterial ribosomal protein bL31 family. Type B subfamily. Part of the 50S ribosomal subunit.

The chain is Large ribosomal subunit protein bL31B from Chlamydia felis (strain Fe/C-56) (Chlamydophila felis).